The primary structure comprises 436 residues: UDP-N-acetylglucosamine 1-carboxyvinyltransferase (436 aa).

22–23 (KN) lines the phosphoenolpyruvate pocket. Position 96 (arginine 96) interacts with UDP-N-acetyl-alpha-D-glucosamine. Residue cysteine 120 is the Proton donor of the active site. Cysteine 120 is subject to 2-(S-cysteinyl)pyruvic acid O-phosphothioketal. Residues 125-129 (RPIDL), aspartate 309, and isoleucine 331 each bind UDP-N-acetyl-alpha-D-glucosamine.

It belongs to the EPSP synthase family. MurA subfamily.

The protein localises to the cytoplasm. It catalyses the reaction phosphoenolpyruvate + UDP-N-acetyl-alpha-D-glucosamine = UDP-N-acetyl-3-O-(1-carboxyvinyl)-alpha-D-glucosamine + phosphate. The protein operates within cell wall biogenesis; peptidoglycan biosynthesis. Its function is as follows. Cell wall formation. Adds enolpyruvyl to UDP-N-acetylglucosamine. In Acidobacterium capsulatum (strain ATCC 51196 / DSM 11244 / BCRC 80197 / JCM 7670 / NBRC 15755 / NCIMB 13165 / 161), this protein is UDP-N-acetylglucosamine 1-carboxyvinyltransferase.